Reading from the N-terminus, the 254-residue chain is Receptor expression-enhancing protein 3 (254 aa).

Transmembrane regions (helical) follow at residues 1–21 (MVSW…YPAY), 35–55 (YVRW…ETVA), and 59–79 (LAWF…LLSP). The tract at residues 162–232 (DEPVGHRPYQ…QSMKSVKTIK (71 aa)) is disordered. Residues 198 to 212 (EQTDEEAEGPFSDDE) show a composition bias toward acidic residues. Threonine 200 carries the phosphothreonine modification. Serine 209 is modified (phosphoserine).

Belongs to the DP1 family.

The protein resides in the endoplasmic reticulum membrane. Microtubule-binding protein required to ensure proper cell division and nuclear envelope reassembly by sequestering the endoplasmic reticulum away from chromosomes during mitosis. Probably acts by clearing the endoplasmic reticulum membrane from metaphase chromosomes. The protein is Receptor expression-enhancing protein 3 (Reep3) of Mus musculus (Mouse).